A 213-amino-acid chain; its full sequence is LexA repressor 2 (213 aa).

The H-T-H motif DNA-binding region spans 27 to 47; sequence QTEIARAFGFKGVRAAQYHLE. Residues S133 and K170 each act as for autocatalytic cleavage activity in the active site.

Belongs to the peptidase S24 family. In terms of assembly, homodimer.

The catalysed reaction is Hydrolysis of Ala-|-Gly bond in repressor LexA.. Its function is as follows. Represses a number of genes involved in the response to DNA damage (SOS response), including recA and lexA. In the presence of single-stranded DNA, RecA interacts with LexA causing an autocatalytic cleavage which disrupts the DNA-binding part of LexA, leading to derepression of the SOS regulon and eventually DNA repair. The sequence is that of LexA repressor 2 from Xanthomonas oryzae pv. oryzae (strain KACC10331 / KXO85).